We begin with the raw amino-acid sequence, 184 residues long: GTP cyclohydrolase 1 (184 aa).

Residues cysteine 74, histidine 77, and cysteine 145 each contribute to the Zn(2+) site.

This sequence belongs to the GTP cyclohydrolase I family. As to quaternary structure, toroid-shaped homodecamer, composed of two pentamers of five dimers.

The catalysed reaction is GTP + H2O = 7,8-dihydroneopterin 3'-triphosphate + formate + H(+). Its pathway is cofactor biosynthesis; 7,8-dihydroneopterin triphosphate biosynthesis; 7,8-dihydroneopterin triphosphate from GTP: step 1/1. This chain is GTP cyclohydrolase 1 (folE), found in Aquifex aeolicus (strain VF5).